Consider the following 241-residue polypeptide: Chaperone protein FimC (241 aa).

The N-terminal stretch at 1 to 36 (MSNKNVNVRKSQEITFCLLAGILMFMAMMVAGRAEA) is a signal peptide.

This sequence belongs to the periplasmic pilus chaperone family.

The protein resides in the periplasm. Required for the biogenesis of type 1 fimbriae. Binds and interact with FimH. This chain is Chaperone protein FimC (fimC), found in Escherichia coli (strain K12).